A 315-amino-acid chain; its full sequence is Ribosomal RNA small subunit methyltransferase H (315 aa).

Residues G34–H36, D53, D100, and H107 each bind S-adenosyl-L-methionine.

This sequence belongs to the methyltransferase superfamily. RsmH family.

The protein resides in the cytoplasm. The catalysed reaction is cytidine(1402) in 16S rRNA + S-adenosyl-L-methionine = N(4)-methylcytidine(1402) in 16S rRNA + S-adenosyl-L-homocysteine + H(+). Specifically methylates the N4 position of cytidine in position 1402 (C1402) of 16S rRNA. In Treponema denticola (strain ATCC 35405 / DSM 14222 / CIP 103919 / JCM 8153 / KCTC 15104), this protein is Ribosomal RNA small subunit methyltransferase H.